A 60-amino-acid chain; its full sequence is Large ribosomal subunit protein uL30 (60 aa).

It belongs to the universal ribosomal protein uL30 family. In terms of assembly, part of the 50S ribosomal subunit.

In Lysinibacillus sphaericus (strain C3-41), this protein is Large ribosomal subunit protein uL30.